Consider the following 880-residue polypeptide: Zinc-responsive transcriptional regulator ZAP1 (880 aa).

Disordered regions lie at residues 1–26 and 140–164; these read MDALTPRDSPKRDDSMATSAATAASA and NNFHSVASDPTSPQQNSKSDLPRRK. Positions 17–26 are enriched in low complexity; the sequence is ATSAATAASA. The segment covering 147–158 has biased composition (polar residues); sequence SDPTSPQQNSKS. 2 positions are modified to phosphoserine: S156 and S166. The tract at residues 182 to 502 is zinc-responsive domain 1 (ZRD(AD1)); that stretch reads KPNPPPGSDD…LTNNDLNDLI (321 aa). The interval 207–402 is transcription activation domain 1 (AD1); sequence HPKSEANIKQ…YEVPFGKHIN (196 aa). Disordered stretches follow at residues 436–482 and 510–555; these read NRCN…VNNS and RFRN…PSSI. The span at 442–456 shows a compositional bias: low complexity; it reads NNLNGSNNNTAGATS. The segment covering 460 to 474 has biased composition (basic residues); sequence QHHHHRIQFHSHKPN. At S515 the chain carries Phosphoserine. The segment covering 545–555 has biased composition (low complexity); the sequence is SSLEDSLPSSI. A C2H2-type 1 zinc finger spans residues 579-604; the sequence is LKCKWKECPESCSSLFDLQRHLLKDH. A zinc-responsive domain 2 (ZRD(AD2)) region spans residues 579–641; sequence LKCKWKECPE…SIVNHINCQH (63 aa). C581, C586, H599, H604, C618, C623, H636, and H641 together coordinate Zn(2+). The transcription activation domain 2 (AD2) stretch occupies residues 611 to 640; sequence HPMEPLACNWEDCDFLGDDTCSIVNHINCQ. The segment at 616–641 adopts a C2H2-type 2; atypical zinc-finger fold; sequence LACNWEDCDFLGDDTCSIVNHINCQH. C2H2-type zinc fingers lie at residues 705 to 730, 738 to 762, 768 to 790, 796 to 818, and 824 to 846; these read VICQWDGCNKSFSSAQELNDHLEAVH, YQCLWHDCHRTFPQRQKLIRHLKVH, YKCKTCKRCFSSEETLVQHTRTH, YKCHICNKKFAISSSLKIHIRTH, and LQCKICGKRFNESSNLSKHIKTH. Positions 705 to 846 form a DNA-binding region, DNA-binding domain; that stretch reads VICQWDGCNK…SNLSKHIKTH (142 aa).

It localises to the nucleus. With respect to regulation, active in zinc-limited cells and repressed in replete cells. Zinc controls ZAP1 DNA binding activity. Functionally, transcription regulator controlling zinc-responsive gene expression. Binds to zinc-responsive elements (ZREs) (consensus sequence 5'-ACCYYNAAGGT-3') in the promoter of target genes. Recruits SWI/SNF, SAGA, and Mediator complexes as coactivators in a zinc-responsive manner. Involved in zinc ion homeostasis by zinc-responsive transcriptional regulation of the zinc uptake system genes ZTR1 and ZTR2. Positively regulates ETR1 expression, affecting mitochondrial function. This Saccharomyces cerevisiae (strain ATCC 204508 / S288c) (Baker's yeast) protein is Zinc-responsive transcriptional regulator ZAP1 (ZAP1).